A 592-amino-acid polypeptide reads, in one-letter code: Bifunctional enzyme BirA/CoaX (592 aa).

Positions 1–329 are biotin--protein ligase; the sequence is MTVLKPSHWR…ISLRPDNRSV (329 aa). The region spanning 83–259 is the BPL/LPL catalytic domain; sequence QTALKHECAS…ELGAVLEQYA (177 aa). Residues 336–592 form a type III pantothenate kinase region; it reads DSERFLLLEG…AAEGGESEHA (257 aa). ATP is bound at residue 344–351; the sequence is EGGNSRLK. Substrate is bound by residues tyrosine 426 and 433–436; that span reads GSDR. Aspartate 435 acts as the Proton acceptor in catalysis. Residue threonine 458 coordinates ATP. A substrate-binding site is contributed by threonine 508.

It in the N-terminal section; belongs to the biotin--protein ligase family. The protein in the C-terminal section; belongs to the type III pantothenate kinase family. Requires NH4(+) as cofactor. K(+) serves as cofactor.

It localises to the cytoplasm. The catalysed reaction is biotin + L-lysyl-[protein] + ATP = N(6)-biotinyl-L-lysyl-[protein] + AMP + diphosphate + H(+). The enzyme catalyses (R)-pantothenate + ATP = (R)-4'-phosphopantothenate + ADP + H(+). Its pathway is cofactor biosynthesis; coenzyme A biosynthesis; CoA from (R)-pantothenate: step 1/5. In terms of biological role, activates biotin to form biotinyl-5'-adenylate and transfers the biotin moiety to biotin-accepting proteins. Functionally, catalyzes the phosphorylation of pantothenate (Pan), the first step in CoA biosynthesis. The sequence is that of Bifunctional enzyme BirA/CoaX (birA/coaX) from Neisseria gonorrhoeae (strain ATCC 700825 / FA 1090).